We begin with the raw amino-acid sequence, 278 residues long: ADP-dependent (S)-NAD(P)H-hydrate dehydratase (278 aa).

Positions 5–272 (TTEIVSRTII…TRIPTYMHRF (268 aa)) constitute a YjeF C-terminal domain. (6S)-NADPHX-binding residues include Ala40, Gly103, and His152. Gly214 is a binding site for AMP. Asp215 is a binding site for (6S)-NADPHX.

The protein belongs to the NnrD/CARKD family. In terms of assembly, homotetramer. The cofactor is Mg(2+).

The enzyme catalyses (6S)-NADHX + ADP = AMP + phosphate + NADH + H(+). It carries out the reaction (6S)-NADPHX + ADP = AMP + phosphate + NADPH + H(+). In terms of biological role, catalyzes the dehydration of the S-form of NAD(P)HX at the expense of ADP, which is converted to AMP. Together with NAD(P)HX epimerase, which catalyzes the epimerization of the S- and R-forms, the enzyme allows the repair of both epimers of NAD(P)HX, a damaged form of NAD(P)H that is a result of enzymatic or heat-dependent hydration. This chain is ADP-dependent (S)-NAD(P)H-hydrate dehydratase, found in Lactiplantibacillus plantarum (strain ATCC BAA-793 / NCIMB 8826 / WCFS1) (Lactobacillus plantarum).